A 392-amino-acid chain; its full sequence is Branched-chain-amino-acid aminotransferase, mitochondrial (392 aa).

A mitochondrion-targeting transit peptide spans M1–Y27. Y168 provides a ligand contact to substrate. K229 carries the N6-(pyridoxal phosphate)lysine modification. K321 is modified (N6-acetyllysine).

The protein belongs to the class-IV pyridoxal-phosphate-dependent aminotransferase family. As to quaternary structure, homodimer. Requires pyridoxal 5'-phosphate as cofactor.

It is found in the mitochondrion. It carries out the reaction L-leucine + 2-oxoglutarate = 4-methyl-2-oxopentanoate + L-glutamate. The enzyme catalyses L-isoleucine + 2-oxoglutarate = (S)-3-methyl-2-oxopentanoate + L-glutamate. The catalysed reaction is L-valine + 2-oxoglutarate = 3-methyl-2-oxobutanoate + L-glutamate. Catalyzes the first reaction in the catabolism of the essential branched chain amino acids leucine, isoleucine, and valine. May also function as a transporter of branched chain alpha-keto acids. The chain is Branched-chain-amino-acid aminotransferase, mitochondrial (BCAT2) from Pongo abelii (Sumatran orangutan).